The chain runs to 63 residues: MGAGTAPKGKRNRTPTHIRCRRCGRRAFNVKKGYCAACGFGRSRRMRKYSWSHKWKKKRNLSY.

Residues Cys20, Cys23, Cys35, and Cys38 each contribute to the Zn(2+) site. The C4-type zinc-finger motif lies at 20-38 (CRRCGRRAFNVKKGYCAAC).

It belongs to the eukaryotic ribosomal protein eL37 family. It depends on Zn(2+) as a cofactor.

In terms of biological role, binds to the 23S rRNA. The polypeptide is Large ribosomal subunit protein eL37 (Thermococcus gammatolerans (strain DSM 15229 / JCM 11827 / EJ3)).